Consider the following 912-residue polypeptide: Brevican core protein (912 aa).

An N-terminal signal peptide occupies residues methionine 1–alanine 22. Residues arginine 36–lysine 155 form the Ig-like V-type domain. 5 cysteine pairs are disulfide-bonded: cysteine 57-cysteine 137, cysteine 179-cysteine 250, cysteine 203-cysteine 224, cysteine 277-cysteine 352, and cysteine 301-cysteine 322. The N-linked (GlcNAc...) asparagine glycan is linked to asparagine 130. Link domains lie at valine 157–alanine 252 and glycine 257–arginine 354. A glycan (N-linked (GlcNAc...) asparagine) is linked at asparagine 337. Disordered regions lie at residues isoleucine 408 to alanine 427 and serine 438 to cysteine 651. At serine 418 the chain carries Phosphoserine. O-linked (Xyl...) (chondroitin sulfate) serine glycosylation is present at serine 418. Positions glutamate 448–glutamate 463 are enriched in basic and acidic residues. Residues glutamate 464–alanine 478 show a composition bias toward acidic residues. A compositionally biased stretch (pro residues) spans valine 520–leucine 537. Residues glycine 603 to arginine 617 are compositionally biased toward basic and acidic residues. The region spanning serine 647–aspartate 683 is the EGF-like domain. Disulfide bonds link cysteine 651–cysteine 662, cysteine 656–cysteine 671, cysteine 673–cysteine 682, cysteine 689–cysteine 700, cysteine 717–cysteine 809, cysteine 785–cysteine 801, cysteine 816–cysteine 859, and cysteine 845–cysteine 872. Residues aspartate 683 to methionine 811 enclose the C-type lectin domain. The region spanning valine 814–proline 874 is the Sushi domain.

It belongs to the aggrecan/versican proteoglycan family. In terms of assembly, interacts with TNR. O-glycosylated; contains chondroitin sulfate. In terms of tissue distribution, brain; expressed in cerebellar astrocytes but not in neurons.

Its subcellular location is the secreted. It localises to the extracellular space. It is found in the extracellular matrix. In terms of biological role, may play a role in the terminally differentiating and the adult nervous system during postnatal development. Could stabilize interactions between hyaluronan (HA) and brain proteoglycans. The polypeptide is Brevican core protein (BCAN) (Bos taurus (Bovine)).